Here is a 245-residue protein sequence, read N- to C-terminus: Orotidine 5'-phosphate decarboxylase (245 aa).

Substrate-binding positions include aspartate 22, lysine 44, 71–80, threonine 131, arginine 192, glutamine 201, glycine 221, and arginine 222; that span reads DLKFHDIPNT. Lysine 73 functions as the Proton donor in the catalytic mechanism.

It belongs to the OMP decarboxylase family. Type 1 subfamily. As to quaternary structure, homodimer.

The enzyme catalyses orotidine 5'-phosphate + H(+) = UMP + CO2. It functions in the pathway pyrimidine metabolism; UMP biosynthesis via de novo pathway; UMP from orotate: step 2/2. Its function is as follows. Catalyzes the decarboxylation of orotidine 5'-monophosphate (OMP) to uridine 5'-monophosphate (UMP). This is Orotidine 5'-phosphate decarboxylase from Yersinia pseudotuberculosis serotype O:3 (strain YPIII).